A 309-amino-acid polypeptide reads, in one-letter code: MQKIVIALGGNALGNNPTEQKDLVQLPARQAVALLKQGYQILLGHGNGPQVGMIYNAFSAAKQVNPNTPTVPFAESGAMSQGYIGLHLLTALYNELLHQKLPHQAVYFLTQTLVEASDPAFQNPNKPVGPFYNTEETARSANPNSTVVEDAGRGWRKVVASPKPVDVLGIDAIKSSFNQGNLVIVGGGGGVPTIKTKSGYATVDGVIDKDLALSEIAIKVEADLFVILTAVDFVYINYGQPNEQKLTCINTKEAKTLMAANQFAKGSMLPKVEACLNFVQSGTNKTAIIAQLDQLAAAIAGKIGTKIVK.

The segment at 125–144 is disordered; it reads NKPVGPFYNTEETARSANPN.

This sequence belongs to the carbamate kinase family.

This chain is Carbamate kinase-like protein, found in Mycoplasma pneumoniae (strain ATCC 29342 / M129 / Subtype 1) (Mycoplasmoides pneumoniae).